The chain runs to 388 residues: MRFLTSGESHGPQLTVIIEGVPANLKITAEDINEEMFKRQGGYGRGRRMKIEKDGVEIVSGVRNGYTLGSPVTIVVTNDDFTHWRNIMGVAPISEEEQEQMKRTISKPRPGHADLIGGIKYNHRDLRNVLERSSARETAARVAVGAVCKILLKQLGINVLSRVVEIGGIKDDTDYDLDTIKKHEDSNDVRVVNEDIAQEIRAKIDQAKKDGDSLGGVVQVIVKNMPVGIGSYVHYDRKLDGRIAQGVVGINAFKGVSFGEGFKAAEKPGSQIQDPILYNDEEGYTRASNHLGGLEGGMSNGMPIVVNGVMKPIPTLYKPLASVDIETKEPFKATIERSDSCAVPAASIVCEHAVAFEITKTLLEEFQSNYMEQLQQQVDERRLRNIEF.

2 residues coordinate NADP(+): R39 and R45. FMN-binding positions include 132 to 134, 251 to 252, G296, 311 to 315, and R337; these read RSS, NA, and KPIPT.

It belongs to the chorismate synthase family. In terms of assembly, homotetramer. It depends on FMNH2 as a cofactor.

It carries out the reaction 5-O-(1-carboxyvinyl)-3-phosphoshikimate = chorismate + phosphate. Its pathway is metabolic intermediate biosynthesis; chorismate biosynthesis; chorismate from D-erythrose 4-phosphate and phosphoenolpyruvate: step 7/7. Functionally, catalyzes the anti-1,4-elimination of the C-3 phosphate and the C-6 proR hydrogen from 5-enolpyruvylshikimate-3-phosphate (EPSP) to yield chorismate, which is the branch point compound that serves as the starting substrate for the three terminal pathways of aromatic amino acid biosynthesis. This reaction introduces a second double bond into the aromatic ring system. This is Chorismate synthase from Staphylococcus carnosus (strain TM300).